The following is a 117-amino-acid chain: Minor capsid protein p17 (117 aa).

An N-linked (GlcNAc...) asparagine; by host glycan is attached at asparagine 12. A helical transmembrane segment spans residues 39-59 (AIILGILILLVIILIVVAIVY). Asparagine 61 and asparagine 98 each carry an N-linked (GlcNAc...) asparagine; by host glycan. The interval 97 to 117 (KNSTTQQHIPSDEQLAELAHS) is disordered.

Belongs to the asfivirus minor capsid protein p17 family. As to quaternary structure, interacts with the minor capsid protein M1249L and with the hexon capsid protein p72 capsomers; these interactions form a rigid zipper structure that stabilizes the capsomers. Interacts with host STING1.

The protein resides in the virion membrane. It localises to the host endoplasmic reticulum membrane. Together with the penton and the other minor capsid proteins (M1249L, p49), forms a complicated network immediately below the outer capsid shell, stabilizing the whole capsid. Three copies of p17 encircle each p72 capsomer in the inner capsid shell, anchoring p72 capsomers on the inner membrane. Required for the assembly of the capsid and icosahedral morphogenesis. Additionally, inhibits the host cGAS-STING pathway through its interaction with STING1 and subsequent interference of the recruitment of downstream components TBK1 and IKBKE. The chain is Minor capsid protein p17 from Ornithodoros (relapsing fever ticks).